The sequence spans 263 residues: Aquaporin Lacbi1:247946 (263 aa).

Topologically, residues 1–18 (MKLTISHHKCAIRKVMAE) are cytoplasmic. Residues 19-39 (FVGVALLVIFGAGTACQVVLS) traverse the membrane as a helical segment. Topologically, residues 40–45 (TNPSSF) are extracellular. A helical transmembrane segment spans residues 46–66 (LSINFGWAIGIATGAWVSAGI). Residues 67 to 89 (SGGHINPAITIAMATYRGFPWRE) are Cytoplasmic-facing. Residues 72–74 (NPA) carry the NPA 1 motif. A helical transmembrane segment spans residues 90–110 (VPGYIFAQALGGFVGAALVYA). Residues 111 to 143 (NYFHAIDIFEGGHIRTQATASLFATFALPYMTQ) are Extracellular-facing. Residues 144 to 164 (ASCFFSEFLATAVLFIVFLAL) traverse the membrane as a helical segment. Residues 165–169 (NDKHN) lie on the Cytoplasmic side of the membrane. The helical transmembrane segment at 170–190 (GALTNGLLPFALFILFIGLGA) threads the bilayer. Over 191–227 (SLGMQTGYAVNPARDFGPRLFLAMAGYGKAVFNYRRQ) the chain is Extracellular. Positions 201 to 203 (NPA) match the NPA 2 motif. The chain crosses the membrane as a helical span at residues 228-248 (YWIWAPIIAPILGAQAGGLLY). The Cytoplasmic segment spans residues 249–263 (DTSIYNGDDSPIKWR).

Belongs to the MIP/aquaporin (TC 1.A.8) family.

The protein resides in the membrane. It carries out the reaction H2O(in) = H2O(out). Its function is as follows. Water channel required to facilitate the transport of water across membranes. Shows low but significant water conductivity, but no glycerol nor ammonium transport activities. This Laccaria bicolor (strain S238N-H82 / ATCC MYA-4686) (Bicoloured deceiver) protein is Aquaporin Lacbi1:247946.